Consider the following 385-residue polypeptide: Deoxyguanosinetriphosphate triphosphohydrolase-like protein (385 aa).

One can recognise an HD domain in the interval 62–197; sequence RLTHSLEVAQ…VSLADDIAYS (136 aa).

It belongs to the dGTPase family. Type 2 subfamily.

The sequence is that of Deoxyguanosinetriphosphate triphosphohydrolase-like protein from Neorickettsia sennetsu (strain ATCC VR-367 / Miyayama) (Ehrlichia sennetsu).